A 471-amino-acid chain; its full sequence is Arginine biosynthesis bifunctional protein ArgJ, mitochondrial (471 aa).

A mitochondrion-targeting transit peptide spans 1 to 33 (MAMAGCNGFFLHQLRQPRLQLARQLGRTPSRAY). Substrate is bound by residues Thr201, Lys230, Thr241, Glu327, Asn466, and Thr471. Thr241 serves as the catalytic Nucleophile.

It belongs to the ArgJ family. In terms of assembly, heterodimer of an alpha and a beta chain. Post-translationally, the alpha and beta chains are autoproteolytically processed from a single precursor protein within the mitochondrion.

Its subcellular location is the mitochondrion matrix. It carries out the reaction N(2)-acetyl-L-ornithine + L-glutamate = N-acetyl-L-glutamate + L-ornithine. The enzyme catalyses L-glutamate + acetyl-CoA = N-acetyl-L-glutamate + CoA + H(+). The protein operates within amino-acid biosynthesis; L-arginine biosynthesis; L-ornithine and N-acetyl-L-glutamate from L-glutamate and N(2)-acetyl-L-ornithine (cyclic): step 1/1. It functions in the pathway amino-acid biosynthesis; L-arginine biosynthesis; N(2)-acetyl-L-ornithine from L-glutamate: step 1/4. In terms of biological role, catalyzes two activities which are involved in the cyclic version of arginine biosynthesis: the synthesis of acetylglutamate from glutamate and acetyl-CoA, and of ornithine by transacetylation between acetylornithine and glutamate. In Chaetomium globosum (strain ATCC 6205 / CBS 148.51 / DSM 1962 / NBRC 6347 / NRRL 1970) (Soil fungus), this protein is Arginine biosynthesis bifunctional protein ArgJ, mitochondrial.